The primary structure comprises 243 residues: Carboxy-S-adenosyl-L-methionine synthase (243 aa).

S-adenosyl-L-methionine contacts are provided by residues tyrosine 35, 68 to 70, 92 to 93, and arginine 199; these read GCS and DN.

Belongs to the class I-like SAM-binding methyltransferase superfamily. Cx-SAM synthase family. In terms of assembly, homodimer.

It catalyses the reaction prephenate + S-adenosyl-L-methionine = carboxy-S-adenosyl-L-methionine + 3-phenylpyruvate + H2O. Catalyzes the conversion of S-adenosyl-L-methionine (SAM) to carboxy-S-adenosyl-L-methionine (Cx-SAM). The sequence is that of Carboxy-S-adenosyl-L-methionine synthase from Helicobacter pylori (strain J99 / ATCC 700824) (Campylobacter pylori J99).